Reading from the N-terminus, the 195-residue chain is Protein GrpE (195 aa).

This sequence belongs to the GrpE family. Homodimer.

The protein resides in the cytoplasm. In terms of biological role, participates actively in the response to hyperosmotic and heat shock by preventing the aggregation of stress-denatured proteins, in association with DnaK and GrpE. It is the nucleotide exchange factor for DnaK and may function as a thermosensor. Unfolded proteins bind initially to DnaJ; upon interaction with the DnaJ-bound protein, DnaK hydrolyzes its bound ATP, resulting in the formation of a stable complex. GrpE releases ADP from DnaK; ATP binding to DnaK triggers the release of the substrate protein, thus completing the reaction cycle. Several rounds of ATP-dependent interactions between DnaJ, DnaK and GrpE are required for fully efficient folding. The protein is Protein GrpE of Francisella tularensis subsp. tularensis (strain FSC 198).